We begin with the raw amino-acid sequence, 138 residues long: Putative pre-16S rRNA nuclease (138 aa).

It belongs to the YqgF nuclease family.

It localises to the cytoplasm. In terms of biological role, could be a nuclease involved in processing of the 5'-end of pre-16S rRNA. This Escherichia coli O7:K1 (strain IAI39 / ExPEC) protein is Putative pre-16S rRNA nuclease.